A 357-amino-acid chain; its full sequence is MSDSKNLNQERQKALDNAISQIEKAFGRGAIMKLKQGAIEKIDSISTGSIALDTALGIGGFPKGRIVEIFGPESSGKTTLALHVIAESQKKGGNCAFIDAEHALDIMYARKLGVNTGDLIVSQPDTGEQALHIVEYLVCSGAIDVIVVDSVAALTPRAEIEGDMGDQHMGLQARLLSHALRKLTSIVSKANCVLIFINQIRMKIGVVYGNPETTTGGNALKFYSSVRLDIRKVSAIKDKDLIIGNQTKVKVVKNKVAPPFKQVDFDIMYNEGISKVGEIIDMGVKLNIIEKAGAYYSYNGIRLGQGKENAKSYLKTNYTTADEIEQKIRNMLASDSDVTCFNTEGSDNLHEVEEAIF.

71–78 provides a ligand contact to ATP; that stretch reads GPESSGKT.

It belongs to the RecA family.

It localises to the cytoplasm. Its function is as follows. Can catalyze the hydrolysis of ATP in the presence of single-stranded DNA, the ATP-dependent uptake of single-stranded DNA by duplex DNA, and the ATP-dependent hybridization of homologous single-stranded DNAs. It interacts with LexA causing its activation and leading to its autocatalytic cleavage. The sequence is that of Protein RecA from Ehrlichia canis (strain Jake).